A 140-amino-acid polypeptide reads, in one-letter code: Putative nickel-responsive regulator (140 aa).

Positions 81, 92, 94, and 100 each coordinate Ni(2+).

The protein belongs to the transcriptional regulatory CopG/NikR family. It depends on Ni(2+) as a cofactor.

Functionally, transcriptional regulator. In Methanothrix thermoacetophila (strain DSM 6194 / JCM 14653 / NBRC 101360 / PT) (Methanosaeta thermophila), this protein is Putative nickel-responsive regulator.